Consider the following 295-residue polypeptide: Bifunctional protein FolD (295 aa).

Residues 166–168 (GRS), S191, and I232 each bind NADP(+).

Belongs to the tetrahydrofolate dehydrogenase/cyclohydrolase family. In terms of assembly, homodimer.

The enzyme catalyses (6R)-5,10-methylene-5,6,7,8-tetrahydrofolate + NADP(+) = (6R)-5,10-methenyltetrahydrofolate + NADPH. The catalysed reaction is (6R)-5,10-methenyltetrahydrofolate + H2O = (6R)-10-formyltetrahydrofolate + H(+). Its pathway is one-carbon metabolism; tetrahydrofolate interconversion. In terms of biological role, catalyzes the oxidation of 5,10-methylenetetrahydrofolate to 5,10-methenyltetrahydrofolate and then the hydrolysis of 5,10-methenyltetrahydrofolate to 10-formyltetrahydrofolate. This is Bifunctional protein FolD from Rhodopseudomonas palustris (strain ATCC BAA-98 / CGA009).